Here is a 163-residue protein sequence, read N- to C-terminus: Phosphopantetheine adenylyltransferase (163 aa).

Thr-10 contacts substrate. Residues 10-11 and His-18 each bind ATP; that span reads TF. Lys-42, Leu-75, and Arg-89 together coordinate substrate. ATP-binding positions include 90–92, Glu-100, and 125–131; these read GVR and YTYVASS.

The protein belongs to the bacterial CoaD family. Homohexamer. It depends on Mg(2+) as a cofactor.

The protein resides in the cytoplasm. It catalyses the reaction (R)-4'-phosphopantetheine + ATP + H(+) = 3'-dephospho-CoA + diphosphate. It participates in cofactor biosynthesis; coenzyme A biosynthesis; CoA from (R)-pantothenate: step 4/5. In terms of biological role, reversibly transfers an adenylyl group from ATP to 4'-phosphopantetheine, yielding dephospho-CoA (dPCoA) and pyrophosphate. This chain is Phosphopantetheine adenylyltransferase, found in Pelodictyon phaeoclathratiforme (strain DSM 5477 / BU-1).